A 182-amino-acid chain; its full sequence is MECIQHESCFDVDDREDAQQIKEQEGTEMVSITQAAKLHNVTRQAIYVAIKQKKLKASKTTRWEIDLKDLEDYKRNRYSRKKSLYQGELLFDNEKGCYSVNQVADMLGIPVQKVYYATRTGTMRGERKGAAWVISQSEIDRYKSEYLNKQTAKKAKGVTVVEHAIAKPEETVSSETLLFENN.

Belongs to the EUO family.

The chain is Early upstream open reading frame from Chlamydophila psittaci (strain ATCC VR-125 / 6BC) (Chlamydia psittaci).